Consider the following 260-residue polypeptide: (+)-borneol dehydrogenase 1 (260 aa).

Residues 20-26, aspartate 44, 67-68, and 94-96 each bind NAD(+); these read GGASGIG, DV, and NAG. Serine 148 functions as the Proton donor in the catalytic mechanism. Residues tyrosine 161, lysine 165, and threonine 196 each contribute to the NAD(+) site. Tyrosine 161 acts as the Proton acceptor in catalysis. Lysine 165 (proton donor/acceptor) is an active-site residue.

It belongs to the short-chain dehydrogenases/reductases (SDR) family.

It catalyses the reaction (1R,2S,4R)-borneol + NAD(+) = (1R,4R)-camphor + NADH + H(+). Its function is as follows. Involved in the biosynthesis of monoterpene natural products related to camphor. Catalayzes the oxidation of (+)-borneol to (+)-camphor. Shows absolute selectivity towards (+)-borneol. Catalyzes the oxidation of (+)-isoborneol to (-)-camphor. Shows absolute selectivity towards (+)-isoborneol. The sequence is that of (+)-borneol dehydrogenase 1 from Salvia officinalis (Sage).